Reading from the N-terminus, the 314-residue chain is Glutathione synthetase (314 aa).

The 187-residue stretch at 125–311 folds into the ATP-grasp domain; the sequence is EKIAAQLFPQ…IAGQLFDAIE (187 aa). An ATP-binding site is contributed by 151–208; the sequence is FVQKQEQAILKPLDGMGGHSIFRSSNGDPNLNVILETLTDGGRTLAIAQRYLQQIIEG. Residues glutamate 282 and asparagine 284 each coordinate Mg(2+).

Belongs to the prokaryotic GSH synthase family. Requires Mg(2+) as cofactor. Mn(2+) serves as cofactor.

It catalyses the reaction gamma-L-glutamyl-L-cysteine + glycine + ATP = glutathione + ADP + phosphate + H(+). It functions in the pathway sulfur metabolism; glutathione biosynthesis; glutathione from L-cysteine and L-glutamate: step 2/2. The protein is Glutathione synthetase of Xylella fastidiosa (strain Temecula1 / ATCC 700964).